A 248-amino-acid polypeptide reads, in one-letter code: UDP-2,3-diacylglucosamine hydrolase (248 aa).

Asp8, His10, Asp41, Asn79, and His114 together coordinate Mn(2+). 79 to 80 (NR) serves as a coordination point for substrate. Residues Asp122, Ser160, Asp171, Gln174, and His202 each contribute to the substrate site. Mn(2+) is bound by residues His202 and His204.

This sequence belongs to the LpxH family. Requires Mn(2+) as cofactor.

The protein localises to the cell inner membrane. The catalysed reaction is UDP-2-N,3-O-bis[(3R)-3-hydroxytetradecanoyl]-alpha-D-glucosamine + H2O = 2-N,3-O-bis[(3R)-3-hydroxytetradecanoyl]-alpha-D-glucosaminyl 1-phosphate + UMP + 2 H(+). The protein operates within glycolipid biosynthesis; lipid IV(A) biosynthesis; lipid IV(A) from (3R)-3-hydroxytetradecanoyl-[acyl-carrier-protein] and UDP-N-acetyl-alpha-D-glucosamine: step 4/6. Its function is as follows. Hydrolyzes the pyrophosphate bond of UDP-2,3-diacylglucosamine to yield 2,3-diacylglucosamine 1-phosphate (lipid X) and UMP by catalyzing the attack of water at the alpha-P atom. Involved in the biosynthesis of lipid A, a phosphorylated glycolipid that anchors the lipopolysaccharide to the outer membrane of the cell. The sequence is that of UDP-2,3-diacylglucosamine hydrolase from Stenotrophomonas maltophilia (strain K279a).